We begin with the raw amino-acid sequence, 610 residues long: Prolactin receptor (610 aa).

Positions 1 to 19 (MPSALAFVLLVLNISLLKG) are cleaved as a signal peptide. Residues 20–229 (QSPPGKPEIH…EMPNDFTLKD (210 aa)) lie on the Extracellular side of the membrane. 2 consecutive Fibronectin type-III domains span residues 22–122 (PPGK…IVEP) and 124–224 (PPRN…MPND). A disulfide bond links cysteine 31 and cysteine 41. The N-linked (GlcNAc...) asparagine glycan is linked to asparagine 54. Cysteine 70 and cysteine 81 form a disulfide bridge. N-linked (GlcNAc...) asparagine glycans are attached at residues asparagine 99 and asparagine 127. Positions 206 and 207 each coordinate Zn(2+). Positions 210-214 (WSRWS) match the WSXWS motif motif. The chain crosses the membrane as a helical span at residues 230–253 (TTVWIIVAILSAVICLIMVWAVAL). Residues 254–610 (KGYSMMTCIF…DPTCFMHSFH (357 aa)) are Cytoplasmic-facing. A Box 1 motif motif is present at residues 262-270 (IFPPVPGPK). Disordered regions lie at residues 317 to 355 (DERLMPSHSKEYPGQGVKPTHLDPDSDSGHGSYDSHSLL), 458 to 482 (TGEEEVAEQKGAKSFPSDKQNTPWP), and 564 to 584 (AKKAPPSFEADQSEKDLASFT). Residues 318–327 (ERLMPSHSKE) are compositionally biased toward basic and acidic residues. A compositionally biased stretch (low complexity) spans 345–354 (GHGSYDSHSL).

Belongs to the type I cytokine receptor family. Type 1 subfamily. As to quaternary structure, interacts with SMARCA1. Interacts with NEK3 and VAV2 and this interaction is prolactin-dependent.

The protein localises to the membrane. Its function is as follows. This is a receptor for the anterior pituitary hormone prolactin. The sequence is that of Prolactin receptor (Prlr) from Rattus norvegicus (Rat).